Consider the following 250-residue polypeptide: Glycerol-1-phosphate phosphohydrolase 2 (250 aa).

Asp-18 functions as the Nucleophile in the catalytic mechanism. Positions 18 and 20 each coordinate Mg(2+). The active-site Proton donor is Asp-20. Lys-64 is covalently cross-linked (Glycyl lysine isopeptide (Lys-Gly) (interchain with G-Cter in ubiquitin)). Ser-90 carries the phosphoserine modification. Lys-144 is covalently cross-linked (Glycyl lysine isopeptide (Lys-Gly) (interchain with G-Cter in ubiquitin)). Mg(2+) is bound at residue Asp-179.

The protein belongs to the HAD-like hydrolase superfamily. DOG/GPP family. In terms of assembly, monomer. It depends on Mg(2+) as a cofactor.

It is found in the cytoplasm. Its subcellular location is the nucleus. It carries out the reaction sn-glycerol 1-phosphate + H2O = glycerol + phosphate. It catalyses the reaction sn-glycerol 3-phosphate + H2O = glycerol + phosphate. In terms of biological role, glycerol-1-phosphate phosphohydrolase involved in glycerol biosynthesis. Plays a role in osmoadaptation. This Saccharomyces cerevisiae (strain ATCC 204508 / S288c) (Baker's yeast) protein is Glycerol-1-phosphate phosphohydrolase 2.